Reading from the N-terminus, the 53-residue chain is ATP synthase F(0) complex subunit 8 (53 aa).

A helical membrane pass occupies residues 8–24 (PWLTTFLIVWISLIVIL).

Belongs to the ATPase protein 8 family. Component of the ATP synthase complex composed at least of ATP5F1A/subunit alpha, ATP5F1B/subunit beta, ATP5MC1/subunit c (homooctomer), MT-ATP6/subunit a, MT-ATP8/subunit 8, ATP5ME/subunit e, ATP5MF/subunit f, ATP5MG/subunit g, ATP5MK/subunit k, ATP5MJ/subunit j, ATP5F1C/subunit gamma, ATP5F1D/subunit delta, ATP5F1E/subunit epsilon, ATP5PF/subunit F6, ATP5PB/subunit b, ATP5PD/subunit d, ATP5PO/subunit OSCP. ATP synthase complex consists of a soluble F(1) head domain (subunits alpha(3) and beta(3)) - the catalytic core - and a membrane F(0) domain - the membrane proton channel (subunits c, a, 8, e, f, g, k and j). These two domains are linked by a central stalk (subunits gamma, delta, and epsilon) rotating inside the F1 region and a stationary peripheral stalk (subunits F6, b, d, and OSCP).

Its subcellular location is the mitochondrion membrane. Subunit 8, of the mitochondrial membrane ATP synthase complex (F(1)F(0) ATP synthase or Complex V) that produces ATP from ADP in the presence of a proton gradient across the membrane which is generated by electron transport complexes of the respiratory chain. ATP synthase complex consist of a soluble F(1) head domain - the catalytic core - and a membrane F(1) domain - the membrane proton channel. These two domains are linked by a central stalk rotating inside the F(1) region and a stationary peripheral stalk. During catalysis, ATP synthesis in the catalytic domain of F(1) is coupled via a rotary mechanism of the central stalk subunits to proton translocation. In vivo, can only synthesize ATP although its ATP hydrolase activity can be activated artificially in vitro. Part of the complex F(0) domain. This chain is ATP synthase F(0) complex subunit 8, found in Alligator mississippiensis (American alligator).